Consider the following 482-residue polypeptide: MGLLAYLLVILLILNVFFAAVTVFLERRDTSATWAWLLVLTFVPIFGFIIYLIFGRKLSGKKIFDWKGQEKIGIQESTANQIEMIRQKEFPFSDPNVKKHRDLIYLLLVNDGAILTQDNEVELFVDGHEKFDALIADIEKAKDHIHLIYYIFHSDELGNRLMRVLERKAAEGLNVKIIYDAMGSRTTKKSFFRTFQKNGGLVRPFFPSKLPLINFRLNYRNHRKLAIIDGDVGYIGGFNIGDEYLGASKKFGYWRDTHLRVHGKAVYAMQTRFIMDWNSASSTHKIDYKARYFPTFHGKGHTSMQIVSSGPDSEWQQIKNGYIKMINAAKKTIYLQSPYFIPDASLLEAIKIAALSGVDVRVMIPNKPDHAFVYRATTNYAGELMETGAKIFIYDNGFIHAKTLVVDGEIASVGTANMDFRSFRLNFEVNAFIYEKQMVQKLEDAFLEDILKSYQLTPELYAKRSLWIKFKEAVSRLLSPIL.

2 helical membrane passes run 4-24 and 34-54; these read LAYL…VTVF and WAWL…YLIF. PLD phosphodiesterase domains follow at residues 217 to 244 and 395 to 422; these read LNYR…GDEY and DNGF…DFRS. Active-site residues include histidine 222, lysine 224, aspartate 229, histidine 400, lysine 402, and aspartate 407.

Belongs to the phospholipase D family. Cardiolipin synthase subfamily.

Its subcellular location is the cell membrane. The catalysed reaction is 2 a 1,2-diacyl-sn-glycero-3-phospho-(1'-sn-glycerol) = a cardiolipin + glycerol. Catalyzes the reversible phosphatidyl group transfer from one phosphatidylglycerol molecule to another to form cardiolipin (CL) (diphosphatidylglycerol) and glycerol. The chain is Cardiolipin synthase (cls) from Listeria monocytogenes serotype 4b (strain CLIP80459).